The following is a 313-amino-acid chain: Ribosomal RNA small subunit methyltransferase H (313 aa).

S-adenosyl-L-methionine contacts are provided by residues 35–37 (GGH), aspartate 55, phenylalanine 79, aspartate 100, and glutamine 107.

This sequence belongs to the methyltransferase superfamily. RsmH family.

Its subcellular location is the cytoplasm. It carries out the reaction cytidine(1402) in 16S rRNA + S-adenosyl-L-methionine = N(4)-methylcytidine(1402) in 16S rRNA + S-adenosyl-L-homocysteine + H(+). Its function is as follows. Specifically methylates the N4 position of cytidine in position 1402 (C1402) of 16S rRNA. This chain is Ribosomal RNA small subunit methyltransferase H, found in Burkholderia vietnamiensis (strain G4 / LMG 22486) (Burkholderia cepacia (strain R1808)).